Consider the following 267-residue polypeptide: Interleukin-1 beta (267 aa).

Residues 1–115 constitute a propeptide that is removed on maturation; that stretch reads MAPVPELTSE…DTWDDGFVCD (115 aa).

This sequence belongs to the IL-1 family. Monomer. In its precursor form, weakly interacts with full-length MEFV; the mature cytokine does not interact at all. Interacts with integrins ITGAV:ITGBV and ITGA5:ITGB1; integrin-binding is required for IL1B signaling. Interacts with cargo receptor TMED10; the interaction is direct and is required for the secretion of IL1B mature form. Interacts with HSP90AB1; the interaction facilitates cargo translocation into the ERGIC. Interacts with HSP90B1; the interaction facilitates cargo translocation into the ERGIC.

It is found in the cytoplasm. The protein localises to the cytosol. The protein resides in the secreted. Its subcellular location is the lysosome. It localises to the extracellular exosome. In terms of biological role, potent pro-inflammatory cytokine. Initially discovered as the major endogenous pyrogen, induces prostaglandin synthesis, neutrophil influx and activation, T-cell activation and cytokine production, B-cell activation and antibody production, and fibroblast proliferation and collagen production. Promotes Th17 differentiation of T-cells. Synergizes with IL12/interleukin-12 to induce IFNG synthesis from T-helper 1 (Th1) cells. Plays a role in angiogenesis by inducing VEGF production synergistically with TNF and IL6. Involved in transduction of inflammation downstream of pyroptosis: its mature form is specifically released in the extracellular milieu by passing through the gasdermin-D (GSDMD) pore. The protein is Interleukin-1 beta (IL1B) of Felis catus (Cat).